Consider the following 248-residue polypeptide: Pyridoxine 5'-phosphate synthase (248 aa).

N11 serves as a coordination point for 3-amino-2-oxopropyl phosphate. 13–14 (DH) contributes to the 1-deoxy-D-xylulose 5-phosphate binding site. R22 contacts 3-amino-2-oxopropyl phosphate. The Proton acceptor role is filled by H47. R49 and H54 together coordinate 1-deoxy-D-xylulose 5-phosphate. The active-site Proton acceptor is E74. Position 104 (T104) interacts with 1-deoxy-D-xylulose 5-phosphate. H198 serves as the catalytic Proton donor. Residues G199 and 220–221 (GH) contribute to the 3-amino-2-oxopropyl phosphate site.

This sequence belongs to the PNP synthase family. As to quaternary structure, homooctamer; tetramer of dimers.

It is found in the cytoplasm. The catalysed reaction is 3-amino-2-oxopropyl phosphate + 1-deoxy-D-xylulose 5-phosphate = pyridoxine 5'-phosphate + phosphate + 2 H2O + H(+). The protein operates within cofactor biosynthesis; pyridoxine 5'-phosphate biosynthesis; pyridoxine 5'-phosphate from D-erythrose 4-phosphate: step 5/5. Its function is as follows. Catalyzes the complicated ring closure reaction between the two acyclic compounds 1-deoxy-D-xylulose-5-phosphate (DXP) and 3-amino-2-oxopropyl phosphate (1-amino-acetone-3-phosphate or AAP) to form pyridoxine 5'-phosphate (PNP) and inorganic phosphate. The polypeptide is Pyridoxine 5'-phosphate synthase (Ruegeria pomeroyi (strain ATCC 700808 / DSM 15171 / DSS-3) (Silicibacter pomeroyi)).